Here is a 685-residue protein sequence, read N- to C-terminus: DEAD-box ATP-dependent RNA helicase 7 (685 aa).

Residues 1–89 (MPSISMMSDA…SELVQADDLK (89 aa)) are disordered. Basic and acidic residues-rich tracts occupy residues 22 to 42 (MKSE…SSSK) and 66 to 78 (AVDL…KSDN). Residues 107–135 (NSLSNFRISKPLKDVLISKGIKALFPIQA) carry the Q motif motif. The region spanning 138–320 (FDNVIDGCDL…TRFLKSAKKT (183 aa)) is the Helicase ATP-binding domain. 151 to 158 (ARTGQGKT) provides a ligand contact to ATP. The DEAD box motif lies at 266 to 269 (DEAD). Residues 349-491 (DLIPDIIRCY…LSAPQPVDVA (143 aa)) enclose the Helicase C-terminal domain.

It belongs to the DEAD box helicase family. DDX21/DDX50 subfamily.

The protein resides in the nucleus. It catalyses the reaction ATP + H2O = ADP + phosphate + H(+). The polypeptide is DEAD-box ATP-dependent RNA helicase 7 (RH7) (Spinacia oleracea (Spinach)).